Consider the following 311-residue polypeptide: Formimidoylglutamase (311 aa).

Mn(2+) is bound by residues His130, Asp155, His157, Asp159, Cys242, and Asp244.

Belongs to the arginase family. It depends on Mn(2+) as a cofactor.

The catalysed reaction is N-formimidoyl-L-glutamate + H2O = formamide + L-glutamate. It functions in the pathway amino-acid degradation; L-histidine degradation into L-glutamate; L-glutamate from N-formimidoyl-L-glutamate (hydrolase route): step 1/1. Its function is as follows. Catalyzes the conversion of N-formimidoyl-L-glutamate to L-glutamate and formamide. The polypeptide is Formimidoylglutamase (Staphylococcus aureus (strain MRSA252)).